The primary structure comprises 397 residues: Tryptophan synthase beta chain (397 aa).

Lys-87 carries the post-translational modification N6-(pyridoxal phosphate)lysine.

This sequence belongs to the TrpB family. As to quaternary structure, tetramer of two alpha and two beta chains. Requires pyridoxal 5'-phosphate as cofactor.

It carries out the reaction (1S,2R)-1-C-(indol-3-yl)glycerol 3-phosphate + L-serine = D-glyceraldehyde 3-phosphate + L-tryptophan + H2O. It participates in amino-acid biosynthesis; L-tryptophan biosynthesis; L-tryptophan from chorismate: step 5/5. In terms of biological role, the beta subunit is responsible for the synthesis of L-tryptophan from indole and L-serine. The polypeptide is Tryptophan synthase beta chain (Enterobacter sp. (strain 638)).